A 415-amino-acid polypeptide reads, in one-letter code: Gamma-glutamyl phosphate reductase (415 aa).

This sequence belongs to the gamma-glutamyl phosphate reductase family.

The protein localises to the cytoplasm. It catalyses the reaction L-glutamate 5-semialdehyde + phosphate + NADP(+) = L-glutamyl 5-phosphate + NADPH + H(+). The protein operates within amino-acid biosynthesis; L-proline biosynthesis; L-glutamate 5-semialdehyde from L-glutamate: step 2/2. Functionally, catalyzes the NADPH-dependent reduction of L-glutamate 5-phosphate into L-glutamate 5-semialdehyde and phosphate. The product spontaneously undergoes cyclization to form 1-pyrroline-5-carboxylate. This Mycolicibacterium vanbaalenii (strain DSM 7251 / JCM 13017 / BCRC 16820 / KCTC 9966 / NRRL B-24157 / PYR-1) (Mycobacterium vanbaalenii) protein is Gamma-glutamyl phosphate reductase.